Consider the following 393-residue polypeptide: uncharacterized protein (393 aa).

The disordered stretch occupies residues 345–393 (PNKWATDDAARREMERTRKARYRAKNRAVADPEDSPPGKRLRRGPKSST). Positions 349–361 (ATDDAARREMERT) are enriched in basic and acidic residues. Residues 383 to 393 (KRLRRGPKSST) show a composition bias toward basic residues.

This is an uncharacterized protein from Ictalurid herpesvirus 1 (strain Auburn) (IcHV-1).